The following is a 300-amino-acid chain: Ribosomal protein L11 methyltransferase (300 aa).

Residues threonine 152, glycine 173, aspartate 195, and asparagine 234 each coordinate S-adenosyl-L-methionine.

Belongs to the methyltransferase superfamily. PrmA family.

The protein localises to the cytoplasm. It catalyses the reaction L-lysyl-[protein] + 3 S-adenosyl-L-methionine = N(6),N(6),N(6)-trimethyl-L-lysyl-[protein] + 3 S-adenosyl-L-homocysteine + 3 H(+). Its function is as follows. Methylates ribosomal protein L11. In Burkholderia vietnamiensis (strain G4 / LMG 22486) (Burkholderia cepacia (strain R1808)), this protein is Ribosomal protein L11 methyltransferase.